A 364-amino-acid polypeptide reads, in one-letter code: Uroporphyrinogen decarboxylase (364 aa).

Residues 28–32 (RQAGR), phenylalanine 47, aspartate 78, tyrosine 158, threonine 213, and histidine 334 each bind substrate.

The protein belongs to the uroporphyrinogen decarboxylase family. Homodimer.

It is found in the cytoplasm. It catalyses the reaction uroporphyrinogen III + 4 H(+) = coproporphyrinogen III + 4 CO2. Its pathway is porphyrin-containing compound metabolism; protoporphyrin-IX biosynthesis; coproporphyrinogen-III from 5-aminolevulinate: step 4/4. Its function is as follows. Catalyzes the decarboxylation of four acetate groups of uroporphyrinogen-III to yield coproporphyrinogen-III. The sequence is that of Uroporphyrinogen decarboxylase from Ralstonia nicotianae (strain ATCC BAA-1114 / GMI1000) (Ralstonia solanacearum).